Consider the following 399-residue polypeptide: S-adenosylmethionine synthase (399 aa).

H17 serves as a coordination point for ATP. Residue D19 participates in Mg(2+) binding. E45 contacts K(+). The L-methionine site is built by E58 and Q101. Residues 101–111 are flexible loop; that stretch reads QSPDIAQGVDE. Residues 177–179, 244–245, D253, 259–260, A276, and K280 contribute to the ATP site; these read DAK, RF, and RK. Position 253 (D253) interacts with L-methionine. Residue K284 coordinates L-methionine.

Belongs to the AdoMet synthase family. In terms of assembly, homotetramer; dimer of dimers. The cofactor is Mg(2+). It depends on K(+) as a cofactor.

It localises to the cytoplasm. It carries out the reaction L-methionine + ATP + H2O = S-adenosyl-L-methionine + phosphate + diphosphate. It functions in the pathway amino-acid biosynthesis; S-adenosyl-L-methionine biosynthesis; S-adenosyl-L-methionine from L-methionine: step 1/1. Functionally, catalyzes the formation of S-adenosylmethionine (AdoMet) from methionine and ATP. The overall synthetic reaction is composed of two sequential steps, AdoMet formation and the subsequent tripolyphosphate hydrolysis which occurs prior to release of AdoMet from the enzyme. The chain is S-adenosylmethionine synthase from Listeria monocytogenes serotype 4b (strain CLIP80459).